Here is a 313-residue protein sequence, read N- to C-terminus: Pantothenate synthetase (313 aa).

43–50 provides a ligand contact to ATP; the sequence is MGALHEGH. The active-site Proton donor is the His-50. Residue Gln-75 participates in (R)-pantoate binding. Gln-75 contacts beta-alanine. Residue 161-164 participates in ATP binding; that stretch reads GEKD. Gln-167 serves as a coordination point for (R)-pantoate. Residues Val-190 and 198-201 each bind ATP; that span reads LSSR.

This sequence belongs to the pantothenate synthetase family. As to quaternary structure, homodimer.

Its subcellular location is the cytoplasm. The catalysed reaction is (R)-pantoate + beta-alanine + ATP = (R)-pantothenate + AMP + diphosphate + H(+). It participates in cofactor biosynthesis; (R)-pantothenate biosynthesis; (R)-pantothenate from (R)-pantoate and beta-alanine: step 1/1. In terms of biological role, catalyzes the condensation of pantoate with beta-alanine in an ATP-dependent reaction via a pantoyl-adenylate intermediate. In Mycobacterium sp. (strain JLS), this protein is Pantothenate synthetase.